The chain runs to 468 residues: Putative proline/betaine transporter (468 aa).

12 helical membrane-spanning segments follow: residues 20–42 (VFAT…YTTA), 63–83 (FAAL…FGII), 91–111 (VVLT…GVLP), 115–135 (MIGL…GFST), 164–184 (IGTL…SFFL), 191–211 (AWGW…GLYL), 246–266 (ILVC…VTAY), 284–304 (VLIT…GKLA), 312–332 (VFLI…SLLN), 336–356 (LPFI…YEAT), 376–396 (VTFN…NSWL), and 403–423 (IYAP…VIAV).

It belongs to the major facilitator superfamily. Metabolite:H+ Symporter (MHS) family (TC 2.A.1.6) family.

It localises to the cell membrane. Its function is as follows. May be a proton symporter involved in the uptake of osmolytes such as proline and glycine betaine. In Staphylococcus haemolyticus (strain JCSC1435), this protein is Putative proline/betaine transporter (proP).